Consider the following 149-residue polypeptide: MQIILLEKVANLGQLGDVVKVKDGYARNFLIPSGKAKRATEANLQAFEARRAELEAKQAEILVDAQARGEKLNGVTITIAQKAGVDGRLFGSITNADIAEAIIASGVQVQKSDVRLPNGPFKAIGEYNVEVALHHDVVVEIQLVVNAEA.

It belongs to the bacterial ribosomal protein bL9 family.

Functionally, binds to the 23S rRNA. This chain is Large ribosomal subunit protein bL9, found in Laribacter hongkongensis (strain HLHK9).